A 390-amino-acid polypeptide reads, in one-letter code: Putative RING-H2 finger protein ATL12 (390 aa).

A signal peptide spans 1–22 (MNSPQEISILFFFIIFLDYVSA). A helical transmembrane segment spans residues 41–61 (LAIITGVFSIVFTLTFVLLVY). An RING-type; atypical zinc finger spans residues 124–166 (CSVCLSKFEDVEILRLLPKCRHAFHIGCIDQWLEQHATCPLCR).

It belongs to the RING-type zinc finger family. ATL subfamily.

Its subcellular location is the membrane. It carries out the reaction S-ubiquitinyl-[E2 ubiquitin-conjugating enzyme]-L-cysteine + [acceptor protein]-L-lysine = [E2 ubiquitin-conjugating enzyme]-L-cysteine + N(6)-ubiquitinyl-[acceptor protein]-L-lysine.. It functions in the pathway protein modification; protein ubiquitination. This chain is Putative RING-H2 finger protein ATL12 (ATL12), found in Arabidopsis thaliana (Mouse-ear cress).